A 332-amino-acid chain; its full sequence is 2,3-diketo-L-gulonate reductase (332 aa).

The Proton donor role is filled by His44. NAD(+)-binding positions include 168 to 174 (ITMVDMS), 224 to 225 (WK), and 304 to 306 (GHE).

Belongs to the LDH2/MDH2 oxidoreductase family. DlgD subfamily. In terms of assembly, homodimer.

The protein localises to the cytoplasm. It catalyses the reaction 3-dehydro-L-gulonate + NAD(+) = 2,3-dioxo-L-gulonate + NADH + H(+). It carries out the reaction 3-dehydro-L-gulonate + NADP(+) = 2,3-dioxo-L-gulonate + NADPH + H(+). Its function is as follows. Catalyzes the reduction of 2,3-diketo-L-gulonate in the presence of NADH, to form 3-keto-L-gulonate. The polypeptide is 2,3-diketo-L-gulonate reductase (Klebsiella pneumoniae (strain 342)).